The primary structure comprises 468 residues: MATGKIVQIIGAVVDVEFPQDSVPKVYDALKVDAKEKGTLVLEVQQQLGGGVVRCIAMGTSDGLRRGLSVENTDRPIEVPVGIATLGRIMNVLGEPIDECGEIGEEQRYAIHREAPSYEEQSNETSLLETGVKVIDLICPFAKGGKIGLFGGAGVGKTVNMMELINNIALQHSGLSVFAGVGERTREGNDFYFEMQEAGVVNLENPSESKVAMVYGQMNEPPGNRLRVALTGLTMAERFRDEGRDVLLFIDNIYRYTLAGTEVSALLGRMPSAVGYQPTLAEEMGVLQERITSTKSGSITSVQAVYVPADDLTDPSPATTFAHLDATVVLSRQIASLGLYPAIDPLDSTSRMLDPLVVGQEHYDIARGVQSLLQRYKELKDIIAILGMDELSENDKQAVSRARKIERFLTQPYHVAEVFTGDPGIYVALKDTLRSFKGLLAGEYDDIPEQAFMYCGAIEDVLEKAKKL.

151-158 provides a ligand contact to ATP; the sequence is GGAGVGKT.

Belongs to the ATPase alpha/beta chains family. As to quaternary structure, F-type ATPases have 2 components, CF(1) - the catalytic core - and CF(0) - the membrane proton channel. CF(1) has five subunits: alpha(3), beta(3), gamma(1), delta(1), epsilon(1). CF(0) has three main subunits: a(1), b(2) and c(9-12). The alpha and beta chains form an alternating ring which encloses part of the gamma chain. CF(1) is attached to CF(0) by a central stalk formed by the gamma and epsilon chains, while a peripheral stalk is formed by the delta and b chains.

The protein localises to the cell inner membrane. It carries out the reaction ATP + H2O + 4 H(+)(in) = ADP + phosphate + 5 H(+)(out). Functionally, produces ATP from ADP in the presence of a proton gradient across the membrane. The catalytic sites are hosted primarily by the beta subunits. The chain is ATP synthase subunit beta 1 from Photobacterium profundum (strain SS9).